The following is a 188-amino-acid chain: Pyridoxal 5'-phosphate synthase subunit PdxT (188 aa).

46 to 48 (GES) contributes to the L-glutamine binding site. Cys78 serves as the catalytic Nucleophile. L-glutamine-binding positions include Arg105 and 133–134 (IR). Catalysis depends on charge relay system residues His169 and Glu171.

It belongs to the glutaminase PdxT/SNO family. As to quaternary structure, in the presence of PdxS, forms a dodecamer of heterodimers. Only shows activity in the heterodimer.

The enzyme catalyses aldehydo-D-ribose 5-phosphate + D-glyceraldehyde 3-phosphate + L-glutamine = pyridoxal 5'-phosphate + L-glutamate + phosphate + 3 H2O + H(+). It carries out the reaction L-glutamine + H2O = L-glutamate + NH4(+). Its pathway is cofactor biosynthesis; pyridoxal 5'-phosphate biosynthesis. Catalyzes the hydrolysis of glutamine to glutamate and ammonia as part of the biosynthesis of pyridoxal 5'-phosphate. The resulting ammonia molecule is channeled to the active site of PdxS. This Thermosipho africanus (strain TCF52B) protein is Pyridoxal 5'-phosphate synthase subunit PdxT.